Consider the following 364-residue polypeptide: MLLIDIKKQLGDLLLDVKLSLPSSGISAIFGRSGAGKSSLANVISGLTSPEEGRITLNNRVLFDSESKVSMPPEKRNIGYVFQDARLFPHYKVEGNLLYGCGGKRTPHFNDVVKLLDIESLLTRYPHSLSGGEKQRVAIGRAILSEPALLIMDEPLASLDLPRKHEVMPYLERLAKEIKIPILYVSHSLDEILRLADNMVLLNQGSVSLSGDITSVWGSPLMRPWLNASEHSALLEGTISELHSDHPMTKVTLNNSQQGIWVKSPCDCVEEGKKIRLRIRANDVSLIKQQPQHSSIRNILPVVIEDLSEDKENDVVAVKLNLSGHVLWANITLWARDELQLGIGQSWFAQIKGVSVTQSDLCSK.

In terms of domain architecture, ABC transporter spans 1 to 229; that stretch reads MLLIDIKKQL…PLMRPWLNAS (229 aa). Position 31–38 (31–38) interacts with ATP; sequence GRSGAGKS. The Mop domain occupies 293 to 360; that stretch reads HSSIRNILPV…IKGVSVTQSD (68 aa).

The protein belongs to the ABC transporter superfamily. Molybdate importer (TC 3.A.1.8) family. As to quaternary structure, the complex is composed of two ATP-binding proteins (ModC), two transmembrane proteins (ModB) and a solute-binding protein (ModA).

It localises to the cell inner membrane. It carries out the reaction molybdate(out) + ATP + H2O = molybdate(in) + ADP + phosphate + H(+). Its function is as follows. Part of the ABC transporter complex ModABC involved in molybdenum import. Responsible for energy coupling to the transport system. The chain is Molybdenum import ATP-binding protein ModC from Aliivibrio fischeri (strain ATCC 700601 / ES114) (Vibrio fischeri).